The chain runs to 111 residues: Universal stress protein B (111 aa).

2 helical membrane passes run 1–21 (MIST…NMAR) and 90–110 (FILT…LMLW).

It belongs to the universal stress protein B family.

The protein resides in the cell inner membrane. The polypeptide is Universal stress protein B (Yersinia pseudotuberculosis serotype O:1b (strain IP 31758)).